The primary structure comprises 308 residues: Methionine synthase (308 aa).

Zn(2+) is bound by residues histidine 201, cysteine 203, glutamate 224, and cysteine 285.

It belongs to the archaeal MetE family. Zn(2+) is required as a cofactor.

It functions in the pathway amino-acid biosynthesis; L-methionine biosynthesis via de novo pathway. In terms of biological role, catalyzes the transfer of a methyl group to L-homocysteine resulting in methionine formation. Can use methylcobalamin and methylcobinamide as methyl donors, but methylcobalamin is not considered to be the physiological substrate. In Methanothermobacter thermautotrophicus (strain ATCC 29096 / DSM 1053 / JCM 10044 / NBRC 100330 / Delta H) (Methanobacterium thermoautotrophicum), this protein is Methionine synthase.